We begin with the raw amino-acid sequence, 445 residues long: Argininosuccinate synthase (445 aa).

Residues Ala17–Ser25 and Ala43 contribute to the ATP site. Tyr99 is an L-citrulline binding site. ATP contacts are provided by Gly129 and Thr131. Thr131, Asn135, and Asp136 together coordinate L-aspartate. Asn135 is an L-citrulline binding site. Residue Asp136 coordinates ATP. Positions 139 and 192 each coordinate L-citrulline. Asp194 contributes to the ATP binding site. Residues Thr201, Glu203, and Glu280 each contribute to the L-citrulline site.

It belongs to the argininosuccinate synthase family. Type 2 subfamily. As to quaternary structure, homotetramer.

The protein resides in the cytoplasm. The enzyme catalyses L-citrulline + L-aspartate + ATP = 2-(N(omega)-L-arginino)succinate + AMP + diphosphate + H(+). Its pathway is amino-acid biosynthesis; L-arginine biosynthesis; L-arginine from L-ornithine and carbamoyl phosphate: step 2/3. The chain is Argininosuccinate synthase from Herminiimonas arsenicoxydans.